The sequence spans 297 residues: B-lymphocyte antigen CD20 (297 aa).

At 1–56 (MTTPRNSVNGTFPAEPMKGPIAMQSGPKPLFRRMSSLVGPTQSFFMRESKTLGAVQ) the chain is on the cytoplasmic side. Ser36 is subject to Phosphoserine. Residues 57–78 (IMNGLFHIALGGLLMIPAGIYA) form a helical membrane-spanning segment. An epitope 1 region spans residues 74-80 (AGIYAPI). At 79 to 84 (PICVTV) the chain is on the extracellular side. Residues 85 to 105 (WYPLWGGIMYIISGSLLAATE) form a helical membrane-spanning segment. At 106 to 120 (KNSRKCLVKGKMIMN) the chain is on the cytoplasmic side. Cys111 is lipidated: S-palmitoyl cysteine. The helical transmembrane segment at 121 to 141 (SLSLFAAISGMILSIMDILNI) threads the bilayer. Topologically, residues 142–188 (KISHFLKMESLNFIRAHTPYINIYNCEPANPSEKNSPSTQYCYSIQS) are extracellular. The interval 146-160 (FLKMESLNFIRAHTP) is epitope 2. A disulfide bridge links Cys167 with Cys183. The epitope 3 (recognized by antibodies, including Rituximab) stretch occupies residues 168 to 175 (EPANPSEK). Residues 189–209 (LFLGILSVMLIFAFFQELVIA) form a helical membrane-spanning segment. Residues 210 to 297 (GIVENEWKRT…SSPIENDSSP (88 aa)) are Cytoplasmic-facing. The S-palmitoyl cysteine moiety is linked to residue Cys220. The residue at position 225 (Ser225) is a Phosphoserine. Thr239 is subject to Phosphothreonine. Residues 247–297 (VGLTETSSQPKNEEDIEIIPIQEEEEEETETNFPEPPQDQESSPIENDSSP) form a disordered region. A compositionally biased stretch (acidic residues) spans 260–276 (EDIEIIPIQEEEEEETE). Residues 285–297 (DQESSPIENDSSP) are compositionally biased toward polar residues.

It belongs to the MS4A family. Forms homotetramers. Interacts with the heavy and light chains of cell surface IgM, the antigen-binding components of the BCR. In terms of processing, phosphorylated on serines and threonines in resting B-cells. Protein kinase C/PKC can use CD20 as substrate. As to expression, expressed on B-cells.

It is found in the cell membrane. Its function is as follows. B-lymphocyte-specific membrane protein that plays a role in the regulation of cellular calcium influx necessary for the development, differentiation, and activation of B-lymphocytes. Functions as a store-operated calcium (SOC) channel component promoting calcium influx after activation by the B-cell receptor/BCR. This chain is B-lymphocyte antigen CD20 (MS4A1), found in Homo sapiens (Human).